The chain runs to 95 residues: Small ribosomal subunit protein uS19 (95 aa).

Belongs to the universal ribosomal protein uS19 family.

Protein S19 forms a complex with S13 that binds strongly to the 16S ribosomal RNA. The polypeptide is Small ribosomal subunit protein uS19 (Bdellovibrio bacteriovorus (strain ATCC 15356 / DSM 50701 / NCIMB 9529 / HD100)).